Here is a 466-residue protein sequence, read N- to C-terminus: Asparagine--tRNA ligase (466 aa).

The protein belongs to the class-II aminoacyl-tRNA synthetase family. As to quaternary structure, homodimer.

It localises to the cytoplasm. It catalyses the reaction tRNA(Asn) + L-asparagine + ATP = L-asparaginyl-tRNA(Asn) + AMP + diphosphate + H(+). This is Asparagine--tRNA ligase from Vibrio cholerae serotype O1 (strain ATCC 39315 / El Tor Inaba N16961).